The sequence spans 393 residues: Riboflavin biosynthesis protein RibBA (393 aa).

Residues 1–200 form a DHBP synthase region; that stretch reads MQFDNIDSAL…IDDLIEYRKK (200 aa). D-ribulose 5-phosphate contacts are provided by residues 27–28, Asp-32, 139–143, and Glu-163; these read RE and RNGHT. Residue Glu-28 coordinates Mg(2+). His-142 lines the Mg(2+) pocket. Residues 201–393 form a GTP cyclohydrolase II region; the sequence is LEPEIEFKAK…TKKIKMGHLI (193 aa). 249–253 contacts GTP; that stretch reads RLHSA. Cys-254, Cys-265, and Cys-267 together coordinate Zn(2+). GTP-binding positions include Gln-270, 291–293, and Thr-313; that span reads EGR. The Proton acceptor; for GTP cyclohydrolase activity role is filled by Asp-325. The Nucleophile; for GTP cyclohydrolase activity role is filled by Arg-327. GTP contacts are provided by Ser-348 and Lys-353.

In the N-terminal section; belongs to the DHBP synthase family. It in the C-terminal section; belongs to the GTP cyclohydrolase II family. Requires Mg(2+) as cofactor. Mn(2+) serves as cofactor. Zn(2+) is required as a cofactor.

It carries out the reaction D-ribulose 5-phosphate = (2S)-2-hydroxy-3-oxobutyl phosphate + formate + H(+). It catalyses the reaction GTP + 4 H2O = 2,5-diamino-6-hydroxy-4-(5-phosphoribosylamino)-pyrimidine + formate + 2 phosphate + 3 H(+). It participates in cofactor biosynthesis; riboflavin biosynthesis; 2-hydroxy-3-oxobutyl phosphate from D-ribulose 5-phosphate: step 1/1. The protein operates within cofactor biosynthesis; riboflavin biosynthesis; 5-amino-6-(D-ribitylamino)uracil from GTP: step 1/4. Functionally, catalyzes the conversion of D-ribulose 5-phosphate to formate and 3,4-dihydroxy-2-butanone 4-phosphate. Its function is as follows. Catalyzes the conversion of GTP to 2,5-diamino-6-ribosylamino-4(3H)-pyrimidinone 5'-phosphate (DARP), formate and pyrophosphate. This chain is Riboflavin biosynthesis protein RibBA, found in Staphylococcus aureus (strain MSSA476).